We begin with the raw amino-acid sequence, 469 residues long: Ribulose bisphosphate carboxylase large chain (469 aa).

Positions 115 and 165 each coordinate substrate. The active-site Proton acceptor is the Lys-167. Lys-169 provides a ligand contact to substrate. Residues Lys-193, Asp-195, and Glu-196 each contribute to the Mg(2+) site. An N6-carboxylysine modification is found at Lys-193. The active-site Proton acceptor is His-286. Arg-287, His-319, and Ser-371 together coordinate substrate.

Belongs to the RuBisCO large chain family. Type I subfamily. As to quaternary structure, heterohexadecamer of 8 large chains and 8 small chains. The cofactor is Mg(2+).

It is found in the plastid. The protein localises to the organellar chromatophore. It carries out the reaction 2 (2R)-3-phosphoglycerate + 2 H(+) = D-ribulose 1,5-bisphosphate + CO2 + H2O. The enzyme catalyses D-ribulose 1,5-bisphosphate + O2 = 2-phosphoglycolate + (2R)-3-phosphoglycerate + 2 H(+). In terms of biological role, ruBisCO catalyzes two reactions: the carboxylation of D-ribulose 1,5-bisphosphate, the primary event in carbon dioxide fixation, as well as the oxidative fragmentation of the pentose substrate. Both reactions occur simultaneously and in competition at the same active site. The protein is Ribulose bisphosphate carboxylase large chain of Paulinella chromatophora.